Reading from the N-terminus, the 425-residue chain is Bifunctional phosphoribosylaminoimidazole carboxylase/phosphoribosylaminoimidazole succinocarboxamide synthetase (425 aa).

Position 2 is an N-acetylalanine (A2). An SAICAR synthetase domain region spans residues A2–L260. Residue Y22 is modified to Phosphotyrosine. K36 bears the N6-acetyllysine mark. Residue S107 is modified to Phosphoserine. At T238 the chain carries Phosphothreonine. K247 is modified (N6-acetyllysine). A linker region spans residues K261–C266. Residues R267 to L425 are AIR carboxylase domain. S274 is subject to Phosphoserine. S332 lines the CO2 pocket.

This sequence in the N-terminal section; belongs to the SAICAR synthetase family. The protein in the C-terminal section; belongs to the AIR carboxylase family. Class II subfamily. In terms of assembly, homooctamer.

The catalysed reaction is 5-amino-1-(5-phospho-D-ribosyl)imidazole-4-carboxylate + L-aspartate + ATP = (2S)-2-[5-amino-1-(5-phospho-beta-D-ribosyl)imidazole-4-carboxamido]succinate + ADP + phosphate + 2 H(+). It catalyses the reaction 5-amino-1-(5-phospho-D-ribosyl)imidazole-4-carboxylate + H(+) = 5-amino-1-(5-phospho-beta-D-ribosyl)imidazole + CO2. The protein operates within purine metabolism; IMP biosynthesis via de novo pathway; 5-amino-1-(5-phospho-D-ribosyl)imidazole-4-carboxamide from 5-amino-1-(5-phospho-D-ribosyl)imidazole-4-carboxylate: step 1/2. It functions in the pathway purine metabolism; IMP biosynthesis via de novo pathway; 5-amino-1-(5-phospho-D-ribosyl)imidazole-4-carboxylate from 5-amino-1-(5-phospho-D-ribosyl)imidazole (carboxylase route): step 1/1. Its function is as follows. Bifunctional phosphoribosylaminoimidazole carboxylase and phosphoribosylaminoimidazole succinocarboxamide synthetase catalyzing two reactions of the de novo purine biosynthetic pathway. This is Bifunctional phosphoribosylaminoimidazole carboxylase/phosphoribosylaminoimidazole succinocarboxamide synthetase from Mus musculus (Mouse).